A 258-amino-acid chain; its full sequence is NAD(P)H-hydrate epimerase (258 aa).

The YjeF N-terminal domain occupies 15–244; the sequence is AFQLDQELMS…RIAKEYGIED (230 aa). 75–79 is a binding site for (6S)-NADPHX; that stretch reads NNGGD. K(+) is bound by residues Asn-76 and Asp-145. (6S)-NADPHX-binding positions include 149–155 and Asp-181; that span reads GFSFKPP. Ser-184 provides a ligand contact to K(+).

The protein belongs to the NnrE/AIBP family. Requires K(+) as cofactor.

It localises to the cytoplasm. It is found in the mitochondrion. The catalysed reaction is (6R)-NADHX = (6S)-NADHX. It catalyses the reaction (6R)-NADPHX = (6S)-NADPHX. Catalyzes the epimerization of the S- and R-forms of NAD(P)HX, a damaged form of NAD(P)H that is a result of enzymatic or heat-dependent hydration. This is a prerequisite for the S-specific NAD(P)H-hydrate dehydratase to allow the repair of both epimers of NAD(P)HX. This Candida albicans (strain WO-1) (Yeast) protein is NAD(P)H-hydrate epimerase.